Reading from the N-terminus, the 150-residue chain is Putative esterase SSO1253 (150 aa).

It belongs to the thioesterase PaaI family.

This chain is Putative esterase SSO1253, found in Saccharolobus solfataricus (strain ATCC 35092 / DSM 1617 / JCM 11322 / P2) (Sulfolobus solfataricus).